Reading from the N-terminus, the 305-residue chain is NAD kinase (305 aa).

Catalysis depends on aspartate 82, which acts as the Proton acceptor. NAD(+) contacts are provided by residues 82–83, 156–157, arginine 184, aspartate 186, 197–202, alanine 221, and glutamine 255; these read DG, ND, and TAYALS.

This sequence belongs to the NAD kinase family. It depends on a divalent metal cation as a cofactor.

The protein localises to the cytoplasm. It carries out the reaction NAD(+) + ATP = ADP + NADP(+) + H(+). In terms of biological role, involved in the regulation of the intracellular balance of NAD and NADP, and is a key enzyme in the biosynthesis of NADP. Catalyzes specifically the phosphorylation on 2'-hydroxyl of the adenosine moiety of NAD to yield NADP. This chain is NAD kinase, found in Cupriavidus pinatubonensis (strain JMP 134 / LMG 1197) (Cupriavidus necator (strain JMP 134)).